Consider the following 318-residue polypeptide: MYLITLLSTIVPILLAVAFLTLVERKILGYMQLRKGPNVVGPYGLLQPIADAVKLFTKEPLRPLTSSVSMFIIAPILALALALTMWTPLPMPHPLINMNLGILFMLAMSSLAVYAILWSGWASNSKYALIGALRAVAQTISYEVTLAIILLSILLMSGSYSLTTLITTQEYIWLILPSWPLTMMWFISTLAETNRAPFDLTEGESELVSGFNVEYAGGPFALFFLAEYANIIMMNALTTILFLGAYNNPMAPELYTTNFATKTLLLTMSFLWIRASYPRFRYDQLMHLLWKNFLPLTLALCMWYVTMPIMLASIPPQT.

8 helical membrane passes run 3-23, 70-90, 100-120, 146-166, 171-191, 222-242, 254-273, and 294-314; these read LITL…LTLV, MFII…TPLP, LGIL…LWSG, LAII…TTLI, YIWL…STLA, LFFL…TILF, LYTT…FLWI, and LPLT…LASI.

The protein belongs to the complex I subunit 1 family.

It localises to the mitochondrion inner membrane. It catalyses the reaction a ubiquinone + NADH + 5 H(+)(in) = a ubiquinol + NAD(+) + 4 H(+)(out). Functionally, core subunit of the mitochondrial membrane respiratory chain NADH dehydrogenase (Complex I) that is believed to belong to the minimal assembly required for catalysis. Complex I functions in the transfer of electrons from NADH to the respiratory chain. The immediate electron acceptor for the enzyme is believed to be ubiquinone. The polypeptide is NADH-ubiquinone oxidoreductase chain 1 (MT-ND1) (Phyllostomus elongatus (Lesser spear-nosed bat)).